A 544-amino-acid polypeptide reads, in one-letter code: CTP synthase (544 aa).

Residues 1–265 form an amidoligase domain region; sequence MTQYIFITGG…DDLVVKHFGL (265 aa). A CTP-binding site is contributed by Ser-13. Ser-13 is a binding site for UTP. ATP-binding positions include 14–19 and Asp-71; that span reads SLGKGI. Residues Asp-71 and Glu-139 each contribute to the Mg(2+) site. Residues 146–148, 186–191, and Lys-222 each bind CTP; these read DIE and KTKPTQ. UTP is bound by residues 186-191 and Lys-222; that span reads KTKPTQ. The 252-residue stretch at 290–541 folds into the Glutamine amidotransferase type-1 domain; that stretch reads TVAMVGKYVN…IAAALDYQTE (252 aa). Gly-351 is a binding site for L-glutamine. Cys-378 (nucleophile; for glutamine hydrolysis) is an active-site residue. Residues 379–382, Glu-402, and Arg-469 contribute to the L-glutamine site; that span reads LGLQ. Residues His-514 and Glu-516 contribute to the active site.

This sequence belongs to the CTP synthase family. Homotetramer.

The enzyme catalyses UTP + L-glutamine + ATP + H2O = CTP + L-glutamate + ADP + phosphate + 2 H(+). The catalysed reaction is L-glutamine + H2O = L-glutamate + NH4(+). It catalyses the reaction UTP + NH4(+) + ATP = CTP + ADP + phosphate + 2 H(+). Its pathway is pyrimidine metabolism; CTP biosynthesis via de novo pathway; CTP from UDP: step 2/2. Its activity is regulated as follows. Allosterically activated by GTP, when glutamine is the substrate; GTP has no effect on the reaction when ammonia is the substrate. The allosteric effector GTP functions by stabilizing the protein conformation that binds the tetrahedral intermediate(s) formed during glutamine hydrolysis. Inhibited by the product CTP, via allosteric rather than competitive inhibition. Functionally, catalyzes the ATP-dependent amination of UTP to CTP with either L-glutamine or ammonia as the source of nitrogen. Regulates intracellular CTP levels through interactions with the four ribonucleotide triphosphates. This Dichelobacter nodosus (strain VCS1703A) protein is CTP synthase.